Reading from the N-terminus, the 199-residue chain is NAD(P)H dehydrogenase (quinone) (199 aa).

One can recognise a Flavodoxin-like domain in the interval 4 to 190; it reads VLVLYYSAYG…AGARYQGRMI (187 aa). Residues 10–15 and 78–80 contribute to the FMN site; these read SAYGHI and TRF. An NAD(+)-binding site is contributed by tyrosine 12. Tryptophan 98 serves as a coordination point for substrate. Residues 113–119 and histidine 134 contribute to the FMN site; that span reads SSATQHG.

It belongs to the WrbA family. The cofactor is FMN.

The enzyme catalyses a quinone + NADH + H(+) = a quinol + NAD(+). The catalysed reaction is a quinone + NADPH + H(+) = a quinol + NADP(+). This chain is NAD(P)H dehydrogenase (quinone), found in Nitrobacter winogradskyi (strain ATCC 25391 / DSM 10237 / CIP 104748 / NCIMB 11846 / Nb-255).